We begin with the raw amino-acid sequence, 679 residues long: UvrABC system protein C (679 aa).

Residues 65–143 enclose the GIY-YIG domain; the sequence is NSPGVYRMLN…IKRLRPRFNV (79 aa). A UVR domain is found at 253–288; that stretch reads QKVKSHMAEAMNQAAEDLDFERAAIYRDRLAALSHV.

Belongs to the UvrC family. As to quaternary structure, interacts with UvrB in an incision complex.

It localises to the cytoplasm. Functionally, the UvrABC repair system catalyzes the recognition and processing of DNA lesions. UvrC both incises the 5' and 3' sides of the lesion. The N-terminal half is responsible for the 3' incision and the C-terminal half is responsible for the 5' incision. This is UvrABC system protein C from Rhizobium etli (strain ATCC 51251 / DSM 11541 / JCM 21823 / NBRC 15573 / CFN 42).